A 102-amino-acid polypeptide reads, in one-letter code: Putative peripheral benzodiazepine receptor-related protein (102 aa).

In terms of tissue distribution, ubiquitous.

This chain is Putative peripheral benzodiazepine receptor-related protein (TSPO), found in Homo sapiens (Human).